The chain runs to 763 residues: Thyrotropin receptor (763 aa).

An N-terminal signal peptide occupies residues Met1–Gly21. The Extracellular portion of the chain corresponds to Lys22–Gly412. Cys31 and Cys41 form a disulfide bridge. Asn77 and Asn99 each carry an N-linked (GlcNAc...) asparagine glycan. LRR repeat units follow at residues Leu100–Glu124, Leu125–Thr150, Asp151–Gly174, Cys176–Gly199, Lys201–Gly223, Tyr225–His248, and Pro264–Asn288. Asn177 and Asn198 each carry an N-linked (GlcNAc...) asparagine glycan. An N-linked (GlcNAc...) asparagine glycan is attached at Asn302. Tyr384 is modified (sulfotyrosine). The chain crosses the membrane as a helical span at residues Tyr413 to Thr440. At Ser441–Arg449 the chain is on the cytoplasmic side. Residues Phe450 to Val472 form a helical membrane-spanning segment. The Extracellular segment spans residues Asp473 to Cys493. Cys493 and Cys568 are oxidised to a cystine. Residues Asn494–Leu516 form a helical membrane-spanning segment. At Glu517–His536 the chain is on the cytoplasmic side. The chain crosses the membrane as a helical span at residues Ala537–Ile559. The Extracellular segment spans residues Ser560–Leu579. A helical transmembrane segment spans residues Ala580–Val601. At Lys602–Arg624 the chain is on the cytoplasmic side. Residues Met625–Met648 traverse the membrane as a helical segment. At Asn649–Lys659 the chain is on the extracellular side. The helical transmembrane segment at Ile660 to Thr681 threads the bilayer. Topologically, residues Lys682–Leu763 are cytoplasmic. Positions Thr761–Leu763 match the PDZ-binding motif.

Belongs to the G-protein coupled receptor 1 family. FSH/LSH/TSH subfamily. In terms of assembly, interacts with heterodimer GPHA2:GPHB5; this interaction stimulates cAMP production. Interacts (via the PDZ-binding motif) with SCRIB; regulates TSHR trafficking and function. In terms of processing, glycosylated. Sulfated. Sulfation on Tyr-384 plays a role in thyrotropin receptor binding and activation.

It is found in the cell membrane. Its subcellular location is the basolateral cell membrane. Functionally, receptor for the thyroid-stimulating hormone (TSH) or thyrotropin. Also acts as a receptor for the heterodimeric glycoprotein hormone (GPHA2:GPHB5) or thyrostimulin. The activity of this receptor is mediated by G proteins which activate adenylate cyclase. Plays a central role in controlling thyroid cell metabolism. The polypeptide is Thyrotropin receptor (TSHR) (Felis catus (Cat)).